The primary structure comprises 74 residues: DUP240 protein DFP2 (74 aa).

The protein belongs to the DUP/COS family.

Its subcellular location is the cytoplasm. The protein resides in the membrane. The sequence is that of DUP240 protein DFP2 from Saccharomyces cerevisiae (strain ATCC 204508 / S288c) (Baker's yeast).